The sequence spans 159 residues: Large ribosomal subunit protein mL50 (159 aa).

This sequence belongs to the mitochondrion-specific ribosomal protein mL50 family. In terms of assembly, component of the mitochondrial ribosome large subunit (39S) which comprises a 16S rRNA and about 50 distinct proteins.

The protein resides in the mitochondrion. The protein is Large ribosomal subunit protein mL50 (MRPL50) of Bos taurus (Bovine).